Reading from the N-terminus, the 134-residue chain is Putative STAG3-like protein 2 (134 aa).

The 86-residue stretch at 10 to 95 (PKVTCRDVLP…GRFKDWMVSM (86 aa)) folds into the SCD domain.

The protein belongs to the SCC3 family.

It localises to the nucleus. This Homo sapiens (Human) protein is Putative STAG3-like protein 2 (STAG3L2).